Here is a 209-residue protein sequence, read N- to C-terminus: MSNDKAKHPMKVGIGGPVGSGKTALIEVLCKKMKTDYQLAVVTNDIYTKEDQQILINAHALESDRIIGVETGGCPHTAIREDVSMNLLAIEELIDKFNNLDIIFIESGGDNLSATFSPELSDWNLYVIDVAAGDKIPRKGGPGITKSDFLIINKIDLAQYVGASLDVMKFDTHTMRNNRPWTFTNLKTGYGIESVINFLREKKLINNKM.

16-23 (GPVGSGKT) provides a ligand contact to GTP.

The protein belongs to the SIMIBI class G3E GTPase family. UreG subfamily. In terms of assembly, homodimer. UreD, UreF and UreG form a complex that acts as a GTP-hydrolysis-dependent molecular chaperone, activating the urease apoprotein by helping to assemble the nickel containing metallocenter of UreC. The UreE protein probably delivers the nickel.

The protein resides in the cytoplasm. Functionally, facilitates the functional incorporation of the urease nickel metallocenter. This process requires GTP hydrolysis, probably effectuated by UreG. In Blochmanniella floridana, this protein is Urease accessory protein UreG.